The chain runs to 62 residues: Alpha-conotoxin-like S1.1 (62 aa).

The N-terminal stretch at Met-1–Ser-21 is a signal peptide. Positions Phe-22–Asn-48 are excised as a propeptide. Disulfide bonds link Cys-50-Cys-56 and Cys-51-Cys-61. Cys-61 bears the Cysteine amide mark.

Belongs to the conotoxin A superfamily. In terms of tissue distribution, expressed by the venom duct.

The protein resides in the secreted. Functionally, alpha-conotoxins act on postsynaptic membranes, they bind to the nicotinic acetylcholine receptors (nAChR) and thus inhibit them. The polypeptide is Alpha-conotoxin-like S1.1 (Conus striatus (Striated cone)).